The chain runs to 559 residues: ATP synthase subunit beta-3, mitochondrial (559 aa).

The span at 1-28 (MASRRILSSLLRSSSSRSTSKSSLIGSR) shows a compositional bias: low complexity. The segment at 1–39 (MASRRILSSLLRSSSSRSTSKSSLIGSRNPRLLSPGPAH) is disordered. Residues 1 to 54 (MASRRILSSLLRSSSSRSTSKSSLIGSRNPRLLSPGPAHGAAPCGTLLGRVAEY) constitute a mitochondrion transit peptide. Position 62 is a phosphoserine (Ser62). 234-241 (GGAGVGKT) serves as a coordination point for ATP.

The protein belongs to the ATPase alpha/beta chains family. As to quaternary structure, F-type ATPases have 2 components, CF(1) - the catalytic core - and CF(0) - the membrane proton channel. CF(1) has five subunits: alpha(3), beta(3), gamma(1), delta(1), epsilon(1). CF(0) has three main subunits: a, b and c.

The protein localises to the mitochondrion. Its subcellular location is the mitochondrion inner membrane. It carries out the reaction ATP + H2O + 4 H(+)(in) = ADP + phosphate + 5 H(+)(out). Functionally, mitochondrial membrane ATP synthase (F(1)F(0) ATP synthase or Complex V) produces ATP from ADP in the presence of a proton gradient across the membrane which is generated by electron transport complexes of the respiratory chain. F-type ATPases consist of two structural domains, F(1) - containing the extramembraneous catalytic core, and F(0) - containing the membrane proton channel, linked together by a central stalk and a peripheral stalk. During catalysis, ATP synthesis in the catalytic domain of F(1) is coupled via a rotary mechanism of the central stalk subunits to proton translocation. Subunits alpha and beta form the catalytic core in F(1). Rotation of the central stalk against the surrounding alpha(3)beta(3) subunits leads to hydrolysis of ATP in three separate catalytic sites on the beta subunits. This Arabidopsis thaliana (Mouse-ear cress) protein is ATP synthase subunit beta-3, mitochondrial.